The sequence spans 396 residues: Aspartate aminotransferase (396 aa).

Gly34, Trp130, and Asn183 together coordinate L-aspartate. Lys246 is subject to N6-(pyridoxal phosphate)lysine. Arg374 provides a ligand contact to L-aspartate.

This sequence belongs to the class-I pyridoxal-phosphate-dependent aminotransferase family. In terms of assembly, homodimer. Pyridoxal 5'-phosphate is required as a cofactor.

The protein localises to the cytoplasm. It carries out the reaction L-aspartate + 2-oxoglutarate = oxaloacetate + L-glutamate. The polypeptide is Aspartate aminotransferase (aspC) (Salmonella typhi).